Here is a 103-residue protein sequence, read N- to C-terminus: Secreted LysM effector Mgx1LysM (103 aa).

The signal sequence occupies residues 1-18 (MKVTTIIAALLSVAVVDA). 2 disulfides stabilise this stretch: Cys-31-Cys-89 and Cys-62-Cys-97. A LysM domain is found at 37 to 85 (IPYVVKKGDTLTHIAHDIYKRKVGICDLAYTNHIGYNPDLIYEDQTLLI). 4 residues coordinate chitin: Gly-44, Thr-48, Asp-75, and Ile-77.

Belongs to the secreted LysM effector family. As to quaternary structure, forms homodimers in a chitin-independent manner through interactions at the N-termini of Mgx1LysM monomers. Homodimers are further polymerized in a chitin-dependent manner.

The protein resides in the secreted. Its subcellular location is the cell wall. Its function is as follows. Secreted effector that enables the plant pathogenic fungus to manipulate host defenses for successful infection. Binds chitin and suppresses the chitin-induced reactive oxygen species (ROS) burst. Chitin-induced polymerization of homodimers forms a contiguous Mg1LysM highly oligomeric super-complexe that is anchored to the chitin in the fungal cell wall to prevent hydrolysis by host chitinases. The protein is Secreted LysM effector Mgx1LysM of Zymoseptoria tritici (strain CBS 115943 / IPO323) (Speckled leaf blotch fungus).